Here is a 103-residue protein sequence, read N- to C-terminus: Non-histone chromosomal protein HMG-14B (103 aa).

Positions 1–103 are disordered; that stretch reads MPKRKVAASR…AVEKEEVKSE (103 aa). Basic and acidic residues predominate over residues 29–50; it reads VPDKAEPKAKALAAKDKSENKK. Residues 51-60 show a composition bias toward basic residues; it reads AQSKGKKGPK. The span at 94-103 shows a compositional bias: basic and acidic residues; that stretch reads AVEKEEVKSE.

The protein belongs to the HMGN family.

It localises to the nucleus. Functionally, binds to the inner side of the nucleosomal DNA thus altering the interaction between the DNA and the histone octamer. May be involved in the process which maintains transcribable genes in a unique chromatin conformation. This chain is Non-histone chromosomal protein HMG-14B (HMG14), found in Gallus gallus (Chicken).